Here is a 490-residue protein sequence, read N- to C-terminus: MDDLSEFFVIEEMFISEPSVAGMKPSTSKTTHSPPPEEPTAPFVNDNLPNPEDEPTIGDLNAFHSGEELHRQRSELARANYEKARPEMIANQRAVTAHLFNRYTEDEERKRVEQQKNKEAMNASTSAPTSSRNGGQSVENRKRRNDVVVAPPTSEEEWKRAQQQHWMGQQQPQMQFQMQQQYHSQQQQYIMMQQQHHHMTGMQQIHHQMPSTSSADSIRSVPTPASSMHQPSPAEMRNGCGMSRNATMDMTCSPMSGGQPIVDENNLAVPEGEWFDKLALAVAEQYNVDTILGPDTYDTFLAELDFSSSESPTKQSPMEMNGDRMPSTAPPPAQNPQHIAQLQQQQNKMRLMQQQQQEMQRIEQQRRQQIMQQQQQQQQQEHQRQQMLLQQQQQQQQMQQHHQMNGGGQFATQAHQQAAYMQQMQRMEQIRHQQQQAQQHQQAQQQHQQQAQHHQMGYGIPNGYPQQMHMHPPAYGAHHMPQPTAFANIN.

Disordered stretches follow at residues 18–55, 105–155, 213–235, 307–362, and 391–490; these read PSVA…EDEP, EDEE…PTSE, SSAD…SPAE, SSSE…MQRI, and QQQQ…ANIN. Positions 105–119 are enriched in basic and acidic residues; sequence EDEERKRVEQQKNKE. Residues 122-138 show a composition bias toward polar residues; it reads NASTSAPTSSRNGGQSV. The span at 307 to 318 shows a compositional bias: polar residues; the sequence is SSSESPTKQSPM. Composition is skewed to low complexity over residues 341 to 359, 391 to 404, and 413 to 456; these read QLQQ…QQEM, QQQQ…HHQM, and QAHQ…HHQM.

Component of a complex consisting of at least a lin-12/Notch intracellular domain (NICD), lag-1, and lag-3. Interacts with a NICD of lin-12/Notch or glp-1/Notch; the interactions are direct. Expressed in the progenitor zone and the early pachytene region of the hermaphrodite gonad.

It localises to the nucleus. Glp-1/Notch and lin-12/Notch proteins promote signaling by recruiting lag-3 to target promoters, where it functions as a transcriptional activator, probably as part of a complex with a Notch intracellular domain (NICD) and the transcription regulator lag-1. Involved in the p53-mediated germ-cell apoptotic response to DNA damage, perhaps acting as a transcriptional activator. May regulate phosphatase lip-1 mRNA transcription downstream of glp-1. This chain is Protein lag-3 (sel-8), found in Caenorhabditis elegans.